Consider the following 158-residue polypeptide: Large ribosomal subunit protein uL30 (158 aa).

The protein belongs to the universal ribosomal protein uL30 family. As to quaternary structure, part of the 50S ribosomal subunit.

This is Large ribosomal subunit protein uL30 from Saccharolobus islandicus (strain Y.N.15.51 / Yellowstone #2) (Sulfolobus islandicus).